We begin with the raw amino-acid sequence, 449 residues long: Serine--tRNA ligase (449 aa).

255–257 (TSE) contacts L-serine. An ATP-binding site is contributed by 286-288 (RSE). L-serine is bound at residue Glu-309. 373–376 (EISS) lines the ATP pocket. Ser-409 is a binding site for L-serine.

The protein belongs to the class-II aminoacyl-tRNA synthetase family. Type-1 seryl-tRNA synthetase subfamily. As to quaternary structure, homodimer. The tRNA molecule binds across the dimer.

It is found in the cytoplasm. The catalysed reaction is tRNA(Ser) + L-serine + ATP = L-seryl-tRNA(Ser) + AMP + diphosphate + H(+). The enzyme catalyses tRNA(Sec) + L-serine + ATP = L-seryl-tRNA(Sec) + AMP + diphosphate + H(+). Its pathway is aminoacyl-tRNA biosynthesis; selenocysteinyl-tRNA(Sec) biosynthesis; L-seryl-tRNA(Sec) from L-serine and tRNA(Sec): step 1/1. Catalyzes the attachment of serine to tRNA(Ser). Is also able to aminoacylate tRNA(Sec) with serine, to form the misacylated tRNA L-seryl-tRNA(Sec), which will be further converted into selenocysteinyl-tRNA(Sec). This Bordetella avium (strain 197N) protein is Serine--tRNA ligase.